Consider the following 102-residue polypeptide: NADH-quinone oxidoreductase subunit K 2 (102 aa).

Transmembrane regions (helical) follow at residues 4–24 (ITPV…TVGV), 30–50 (IVII…NLIA), and 62–82 (IFAI…LGIL).

This sequence belongs to the complex I subunit 4L family. As to quaternary structure, NDH-1 is composed of 14 different subunits. Subunits NuoA, H, J, K, L, M, N constitute the membrane sector of the complex.

The protein localises to the cell inner membrane. It catalyses the reaction a quinone + NADH + 5 H(+)(in) = a quinol + NAD(+) + 4 H(+)(out). NDH-1 shuttles electrons from NADH, via FMN and iron-sulfur (Fe-S) centers, to quinones in the respiratory chain. The immediate electron acceptor for the enzyme in this species is believed to be ubiquinone. Couples the redox reaction to proton translocation (for every two electrons transferred, four hydrogen ions are translocated across the cytoplasmic membrane), and thus conserves the redox energy in a proton gradient. This is NADH-quinone oxidoreductase subunit K 2 from Solibacter usitatus (strain Ellin6076).